We begin with the raw amino-acid sequence, 170 residues long: MDLKNYVASIENYPKEGIIFRDITPLMNDGEAYKYATEKIVEFAKDHHIDIVVGPEARGFIFGCPVSYALGVGFVPVRKPGKLPREVIEYAYDLEYGSNKLCLHKDSIKPGQKVLVVDDLLATGGTVEATIKLVEELGGVVAGLAFLIELVDLKGRERLDKYPMITLMQY.

This sequence belongs to the purine/pyrimidine phosphoribosyltransferase family. In terms of assembly, homodimer.

The protein resides in the cytoplasm. The catalysed reaction is AMP + diphosphate = 5-phospho-alpha-D-ribose 1-diphosphate + adenine. It functions in the pathway purine metabolism; AMP biosynthesis via salvage pathway; AMP from adenine: step 1/1. Catalyzes a salvage reaction resulting in the formation of AMP, that is energically less costly than de novo synthesis. The sequence is that of Adenine phosphoribosyltransferase from Fusobacterium nucleatum subsp. nucleatum (strain ATCC 25586 / DSM 15643 / BCRC 10681 / CIP 101130 / JCM 8532 / KCTC 2640 / LMG 13131 / VPI 4355).